Consider the following 449-residue polypeptide: Probable phosphoglucosamine mutase (449 aa).

Residue S96 is the Phosphoserine intermediate of the active site. Residues S96, D233, D235, and D237 each coordinate Mg(2+). Position 96 is a phosphoserine (S96).

It belongs to the phosphohexose mutase family. Mg(2+) is required as a cofactor. Post-translationally, activated by phosphorylation.

The enzyme catalyses alpha-D-glucosamine 1-phosphate = D-glucosamine 6-phosphate. Catalyzes the conversion of glucosamine-6-phosphate to glucosamine-1-phosphate. Does not display phosphoglucomutase (PGM) or phosphomannomutase (PMM) activities. This Thermococcus kodakarensis (strain ATCC BAA-918 / JCM 12380 / KOD1) (Pyrococcus kodakaraensis (strain KOD1)) protein is Probable phosphoglucosamine mutase (glmM).